A 301-amino-acid chain; its full sequence is ATP synthase gamma chain (301 aa).

This sequence belongs to the ATPase gamma chain family. As to quaternary structure, F-type ATPases have 2 components, CF(1) - the catalytic core - and CF(0) - the membrane proton channel. CF(1) has five subunits: alpha(3), beta(3), gamma(1), delta(1), epsilon(1). CF(0) has three main subunits: a, b and c.

Its subcellular location is the cell inner membrane. Produces ATP from ADP in the presence of a proton gradient across the membrane. The gamma chain is believed to be important in regulating ATPase activity and the flow of protons through the CF(0) complex. This is ATP synthase gamma chain from Bordetella pertussis (strain Tohama I / ATCC BAA-589 / NCTC 13251).